Reading from the N-terminus, the 150-residue chain is MQVILLDKIGNLGGLGDTVNVKSGYARNFLIPQGKAVMATKGNVEMFEARRAELEAKVAEQLAAAEARAEKVNALEAVVLASKAGDEGKLFGSIGTRDIAEAITAAGVEVAKSEVRLPEGALRNTGEFEISVQLHSEVFATINLQVVAAE.

This sequence belongs to the bacterial ribosomal protein bL9 family.

In terms of biological role, binds to the 23S rRNA. In Vibrio campbellii (strain ATCC BAA-1116), this protein is Large ribosomal subunit protein bL9.